We begin with the raw amino-acid sequence, 468 residues long: ERO1-like protein alpha (468 aa).

The N-terminal stretch at 1 to 23 (MGHRWGFLIVFLGAVGLLGSGYG) is a signal peptide. 8 cysteine pairs are disulfide-bonded: Cys-35/Cys-48, Cys-37/Cys-46, Cys-85/Cys-391, Cys-94/Cys-99, Cys-94/Cys-131, Cys-99/Cys-104, Cys-208/Cys-241, and Cys-394/Cys-397. Phosphoserine is present on residues Ser-106, Ser-143, and Ser-145. FAD is bound by residues Arg-187, Thr-189, and Trp-200. Residues Ser-252 and His-255 each coordinate FAD. A glycan (N-linked (GlcNAc...) asparagine) is linked at Asn-280. FAD is bound by residues Arg-287 and Arg-300. An N-linked (GlcNAc...) asparagine glycan is attached at Asn-384.

It belongs to the EROs family. Predominantly monomer. May function both as a monomer and a homodimer. Interacts with PDILT. Interacts with ERP44; the interaction results in retention of ERO1A in the endoplasmic reticulum. It depends on FAD as a cofactor. In terms of processing, the Cys-94/Cys-99 and Cys-394/Cys-397 disulfide bonds constitute the redox-active center. The Cys-94/Cys-99 disulfide bond may accept electron from P4HB and funnel them to the active site disulfide Cys-394/Cys-397. The regulatory Cys-99/Cys-104 disulfide bond stabilizes the other regulatory bond Cys-94/Cys-131. Phosphorylated on Ser-145 by FAM20C in the Golgi which increases its enzymatic activity. Phosphorylation is induced by lactation. It is also induced by hypoxia and reductive stress.

The protein resides in the endoplasmic reticulum membrane. It localises to the golgi apparatus lumen. Its subcellular location is the secreted. It is found in the cell projection. The protein localises to the dendrite. Enzyme activity is tightly regulated to prevent the accumulation of reactive oxygen species in the endoplasmic reticulum. Reversibly down-regulated by the formation of disulfide bonds between the active site Cys-94 and Cys-131, and between Cys-99 and Cys-104. Glutathione may be required to regulate its activity in the endoplasmic reticulum. Functionally, oxidoreductase involved in disulfide bond formation in the endoplasmic reticulum. Efficiently reoxidizes P4HB/PDI, the enzyme catalyzing protein disulfide formation, in order to allow P4HB to sustain additional rounds of disulfide formation. Following P4HB reoxidation, passes its electrons to molecular oxygen via FAD, leading to the production of reactive oxygen species (ROS) in the cell. Required for the proper folding of immunoglobulins. Plays an important role in ER stress-induced, CHOP-dependent apoptosis by activating the inositol 1,4,5-trisphosphate receptor IP3R1. The protein is ERO1-like protein alpha of Sus scrofa (Pig).